Here is a 389-residue protein sequence, read N- to C-terminus: PqqA peptide cyclase (389 aa).

Residues 19-234 (VGLPLWLLAE…TNEYRARLEA (216 aa)) enclose the Radical SAM core domain. [4Fe-4S] cluster-binding residues include Cys33, Cys37, and Cys40.

This sequence belongs to the radical SAM superfamily. PqqE family. As to quaternary structure, interacts with PqqD. The interaction is necessary for activity of PqqE. The cofactor is [4Fe-4S] cluster.

It catalyses the reaction [PQQ precursor protein] + S-adenosyl-L-methionine = E-Y cross-linked-[PQQ precursor protein] + 5'-deoxyadenosine + L-methionine + H(+). The protein operates within cofactor biosynthesis; pyrroloquinoline quinone biosynthesis. Its function is as follows. Catalyzes the cross-linking of a glutamate residue and a tyrosine residue in the PqqA protein as part of the biosynthesis of pyrroloquinoline quinone (PQQ). This chain is PqqA peptide cyclase, found in Pseudomonas syringae pv. syringae (strain B728a).